The chain runs to 155 residues: Small ribosomal subunit protein uS7c (155 aa).

This sequence belongs to the universal ribosomal protein uS7 family. In terms of assembly, part of the 30S ribosomal subunit.

The protein localises to the plastid. Its subcellular location is the chloroplast. Functionally, one of the primary rRNA binding proteins, it binds directly to 16S rRNA where it nucleates assembly of the head domain of the 30S subunit. The sequence is that of Small ribosomal subunit protein uS7c (rps7) from Cryptomeria japonica (Japanese cedar).